A 104-amino-acid chain; its full sequence is Protein SMALL AUXIN UP-REGULATED RNA 12 (104 aa).

This sequence belongs to the ARG7 family. In terms of tissue distribution, expressed in flowers and etiolated hypocotyls.

It is found in the cell membrane. Its function is as follows. Provide a mechanistic link between auxin and plasma membrane H(+)-ATPases (PM H(+)-ATPases, e.g. AHA1 and AHA2), and triggers PM H(+)-ATPases activity by promoting phosphorylation of their C-terminal autoinhibitory domain as a result of PP2C-D subfamily of type 2C phosphatases inhibition, thus leading to the acidification of the apoplast and the facilitation of solutes and water uptake to drive cell expansion. Triggers plant growth probably by promoting cell elongation. Regulates branch angles and bending. The sequence is that of Protein SMALL AUXIN UP-REGULATED RNA 12 from Arabidopsis thaliana (Mouse-ear cress).